The chain runs to 463 residues: 4-hydroxybenzoate polyprenyltransferase, mitochondrial (463 aa).

2 disordered regions span residues 28–48 (NNNT…STFN) and 133–152 (LLDD…NNKP). The segment covering 137–150 (NNSNSNNNNNSNNN) has biased composition (low complexity). A run of 7 helical transmembrane segments spans residues 181-201 (IGVW…APAG), 206-226 (LKTM…GCVI), 257-277 (LIFL…SLNY), 305-325 (FVLG…IAGS), 330-350 (IVAP…TIYA), 375-395 (IILS…GIAA), and 431-451 (FISN…SKLL).

It belongs to the UbiA prenyltransferase family. It depends on Mg(2+) as a cofactor.

Its subcellular location is the mitochondrion inner membrane. It carries out the reaction an all-trans-polyprenyl diphosphate + 4-hydroxybenzoate = a 4-hydroxy-3-(all-trans-polyprenyl)benzoate + diphosphate. It functions in the pathway cofactor biosynthesis; ubiquinone biosynthesis. In terms of biological role, catalyzes the prenylation of para-hydroxybenzoate (PHB) with an all-trans polyprenyl group. Mediates the second step in the final reaction sequence of coenzyme Q (CoQ) biosynthesis, which is the condensation of the polyisoprenoid side chain with PHB. Catalyzes the prenylation of para-hydroxybenzoate (PHB) with an all-trans polyprenyl group. Mediates the second step in the final reaction sequence of coenzyme Q (CoQ) biosynthesis, which is the condensation of the polyisoprenoid side chain with PHB, generating the first membrane-bound Q intermediate. The chain is 4-hydroxybenzoate polyprenyltransferase, mitochondrial from Dictyostelium discoideum (Social amoeba).